A 972-amino-acid polypeptide reads, in one-letter code: N-alpha-acetyltransferase 25, NatB auxiliary subunit (972 aa).

TPR repeat units follow at residues 11–44 (NDRRLRPIYDYLDNGNNKMAIQQADKLLKKHKDL), 45–78 (HCAKVLKAIGLQRTGKQEEAFTLAQEVAALEPTD), 79–112 (DNSLQALTILYREMHRPELVTKLYEAAVKKVPNS), and 114–146 (EYHSHLFMAYARVGEYKKMQQAGMALYKIVPKN).

Belongs to the MDM20/NAA25 family. Component of the N-terminal acetyltransferase B (NatB) complex which is composed of NAA20 and NAA25.

It is found in the cytoplasm. Functionally, non-catalytic subunit of the NatB complex which catalyzes acetylation of the N-terminal methionine residues of peptides beginning with Met-Asp, Met-Glu, Met-Asn and Met-Gln. May play a role in normal cell-cycle progression. This Homo sapiens (Human) protein is N-alpha-acetyltransferase 25, NatB auxiliary subunit (NAA25).